A 250-amino-acid chain; its full sequence is DNA repair protein RecO (250 aa).

Belongs to the RecO family.

Functionally, involved in DNA repair and RecF pathway recombination. The protein is DNA repair protein RecO of Staphylococcus aureus (strain MW2).